Reading from the N-terminus, the 857-residue chain is DNA gyrase subunit A (857 aa).

The region spanning 39-507 is the Topo IIA-type catalytic domain; sequence LPDVRDGLKP…YEGDMSIEDL (469 aa). The O-(5'-phospho-DNA)-tyrosine intermediate role is filled by Y127. Residues 534–540 carry the GyrA-box motif; the sequence is QKRGGKG. A disordered region spans residues 825–857; the sequence is REAEEVDGDVAVDETAEGAATTGTDEGEAPSAE. The segment covering 828–840 has biased composition (acidic residues); that stretch reads EEVDGDVAVDETA.

This sequence belongs to the type II topoisomerase GyrA/ParC subunit family. Heterotetramer, composed of two GyrA and two GyrB chains. In the heterotetramer, GyrA contains the active site tyrosine that forms a transient covalent intermediate with DNA, while GyrB binds cofactors and catalyzes ATP hydrolysis.

It is found in the cytoplasm. It catalyses the reaction ATP-dependent breakage, passage and rejoining of double-stranded DNA.. Its function is as follows. A type II topoisomerase that negatively supercoils closed circular double-stranded (ds) DNA in an ATP-dependent manner to modulate DNA topology and maintain chromosomes in an underwound state. Negative supercoiling favors strand separation, and DNA replication, transcription, recombination and repair, all of which involve strand separation. Also able to catalyze the interconversion of other topological isomers of dsDNA rings, including catenanes and knotted rings. Type II topoisomerases break and join 2 DNA strands simultaneously in an ATP-dependent manner. This is DNA gyrase subunit A from Streptomyces coelicolor (strain ATCC BAA-471 / A3(2) / M145).